The following is a 41-amino-acid chain: Photosystem I reaction center subunit IX (41 aa).

Residues 7–27 traverse the membrane as a helical segment; the sequence is YLSTAPVVAFAWLTFTAGFII.

Belongs to the PsaJ family.

The protein resides in the plastid. The protein localises to the chloroplast thylakoid membrane. In terms of biological role, may help in the organization of the PsaE and PsaF subunits. This chain is Photosystem I reaction center subunit IX, found in Stigeoclonium helveticum (Green alga).